The following is a 961-amino-acid chain: Endochitinase A (961 aa).

Positions 1 to 21 are cleaved as a signal peptide; the sequence is MAPKLFTFVSALSGLASLASA. Residues 28 to 339 form the GH18 domain; sequence SNIAVYYGQG…EKIREILYDL (312 aa). The Proton donor role is filled by glutamate 175. 4 disordered regions span residues 338 to 720, 767 to 787, 813 to 842, and 912 to 933; these read DLDP…TTTE, TDVP…TADI, PPAT…GEVS, and HVPV…ASPT. Positions 342–355 are enriched in pro residues; that stretch reads NHPPPTTSPTPTPT. Low complexity-rich tracts occupy residues 356–510, 519–544, 552–604, and 612–635; these read PSTT…STSS, SSTS…PVIS, TSSS…PETT, and TPGS…PATS. Polar residues predominate over residues 636–665; the sequence is GGHTETSTVSTSSANQTPSASTSKPLIPTN. Residues 666 to 720 show a composition bias toward low complexity; sequence SASSTSTGSVTSTPSAPGVPSSSAGSDETATTSTTDSEPTSTSSGSVTAKPTTTE. A lipid anchor (GPI-anchor amidated glycine) is attached at glycine 936. Residues 937–961 constitute a propeptide, removed in mature form; sequence AGSRYDVVKGVPALVALALSLLAVL.

It belongs to the glycosyl hydrolase 18 family. Chitinase class III subfamily. O-glycosylated but not N-glycosylated.

It is found in the cell membrane. Its subcellular location is the secreted. The protein resides in the cell wall. The protein localises to the cell tip. It carries out the reaction Random endo-hydrolysis of N-acetyl-beta-D-glucosaminide (1-&gt;4)-beta-linkages in chitin and chitodextrins.. In terms of biological role, GPI-anchored chitinase involved in the degradation of chitin, a component of the cell walls of fungi and exoskeletal elements of some animals (including worms and arthropods). Required to reshape the cell wall at the sites where cell wall remodeling and/or cell wall maturation actively take place such as sites of conidia formation. In Emericella nidulans (Aspergillus nidulans), this protein is Endochitinase A (chiA).